Here is a 216-residue protein sequence, read N- to C-terminus: Octanoyltransferase (216 aa).

Residues 29 to 209 form the BPL/LPL catalytic domain; sequence DRAGECVWLL…SFDAVFGPCP (181 aa). Substrate is bound by residues 68–75, 140–142, and 153–155; these read RGGQYTYH, AIG, and GFA. Residue C171 is the Acyl-thioester intermediate of the active site.

It belongs to the LipB family.

It localises to the cytoplasm. It carries out the reaction octanoyl-[ACP] + L-lysyl-[protein] = N(6)-octanoyl-L-lysyl-[protein] + holo-[ACP] + H(+). It functions in the pathway protein modification; protein lipoylation via endogenous pathway; protein N(6)-(lipoyl)lysine from octanoyl-[acyl-carrier-protein]: step 1/2. In terms of biological role, catalyzes the transfer of endogenously produced octanoic acid from octanoyl-acyl-carrier-protein onto the lipoyl domains of lipoate-dependent enzymes. Lipoyl-ACP can also act as a substrate although octanoyl-ACP is likely to be the physiological substrate. The chain is Octanoyltransferase from Rhodospirillum rubrum (strain ATCC 11170 / ATH 1.1.1 / DSM 467 / LMG 4362 / NCIMB 8255 / S1).